A 161-amino-acid chain; its full sequence is Cell division protein SepF (161 aa).

The protein belongs to the SepF family. As to quaternary structure, homodimer. Interacts with FtsZ.

It is found in the cytoplasm. In terms of biological role, cell division protein that is part of the divisome complex and is recruited early to the Z-ring. Probably stimulates Z-ring formation, perhaps through the cross-linking of FtsZ protofilaments. Its function overlaps with FtsA. The chain is Cell division protein SepF from Finegoldia magna (strain ATCC 29328 / DSM 20472 / WAL 2508) (Peptostreptococcus magnus).